The chain runs to 359 residues: Protein RecA (359 aa).

ATP is bound at residue 77–84 (GPESSGKT).

The protein belongs to the RecA family.

It is found in the cytoplasm. Its function is as follows. Can catalyze the hydrolysis of ATP in the presence of single-stranded DNA, the ATP-dependent uptake of single-stranded DNA by duplex DNA, and the ATP-dependent hybridization of homologous single-stranded DNAs. It interacts with LexA causing its activation and leading to its autocatalytic cleavage. The polypeptide is Protein RecA (Paramagnetospirillum magneticum (strain ATCC 700264 / AMB-1) (Magnetospirillum magneticum)).